The sequence spans 418 residues: Glutamyl-tRNA reductase (418 aa).

Substrate contacts are provided by residues 49–52 (TCNR), Ser-109, 114–116 (EPQ), and Gln-120. The active-site Nucleophile is Cys-50. Residue 189 to 194 (GAGETI) participates in NADP(+) binding.

The protein belongs to the glutamyl-tRNA reductase family. Homodimer.

It carries out the reaction (S)-4-amino-5-oxopentanoate + tRNA(Glu) + NADP(+) = L-glutamyl-tRNA(Glu) + NADPH + H(+). The protein operates within porphyrin-containing compound metabolism; protoporphyrin-IX biosynthesis; 5-aminolevulinate from L-glutamyl-tRNA(Glu): step 1/2. In terms of biological role, catalyzes the NADPH-dependent reduction of glutamyl-tRNA(Glu) to glutamate 1-semialdehyde (GSA). This chain is Glutamyl-tRNA reductase, found in Enterobacter sp. (strain 638).